The primary structure comprises 781 residues: Poly(ADP-ribose) glycohydrolase 1 (781 aa).

Disordered stretches follow at residues 28–87 (AHQV…VSEN), 102–131 (SLDN…NNKS), and 206–232 (ADST…DADS). Residues 106–121 (VTERSEHTLDNHKSTE) are compositionally biased toward basic and acidic residues.

This sequence belongs to the poly(ADP-ribose) glycohydrolase family. Expressed in head and tail neurons. Also detected in the central nerve cord and motor neurons.

Its subcellular location is the nucleus. It carries out the reaction [(1''-&gt;2')-ADP-alpha-D-ribose](n) + H2O = [(1''-&gt;2')-ADP-alpha-D-ribose](n-1) + ADP-D-ribose. Poly(ADP-ribose) synthesized after DNA damage is only present transiently and is rapidly degraded by poly(ADP-ribose) glycohydrolase. Poly(ADP-ribose) metabolism may be required for maintenance of the normal function of neuronal cells. This Caenorhabditis elegans protein is Poly(ADP-ribose) glycohydrolase 1.